Consider the following 111-residue polypeptide: Cytochrome c6-like (111 aa).

Residues 1–25 form the signal peptide; sequence MQKFLKLVLVTFLFLISTLTPPANA. Residues C39, C42, H43, and M83 each contribute to the heme c site.

It belongs to the cytochrome c family. PetJ subfamily. Binds 1 heme c group covalently per subunit.

The protein localises to the cellular thylakoid lumen. The sequence is that of Cytochrome c6-like from Nostoc sp. (strain PCC 7120 / SAG 25.82 / UTEX 2576).